The sequence spans 834 residues: DNA-directed RNA polymerase subunit beta' (834 aa).

Residues Cys88, Cys90, Cys104, and Cys107 each coordinate Zn(2+). Mg(2+) contacts are provided by Asp641, Asp643, and Asp645.

This sequence belongs to the RNA polymerase beta' chain family. RpoC1 subfamily. In terms of assembly, in plastids the minimal PEP RNA polymerase catalytic core is composed of four subunits: alpha, beta, beta', and beta''. When a (nuclear-encoded) sigma factor is associated with the core the holoenzyme is formed, which can initiate transcription. Mg(2+) serves as cofactor. It depends on Zn(2+) as a cofactor.

Its subcellular location is the plastid. It carries out the reaction RNA(n) + a ribonucleoside 5'-triphosphate = RNA(n+1) + diphosphate. DNA-dependent RNA polymerase catalyzes the transcription of DNA into RNA using the four ribonucleoside triphosphates as substrates. This chain is DNA-directed RNA polymerase subunit beta' (rpoC1), found in Helicosporidium sp. subsp. Simulium jonesii (Green alga).